The sequence spans 204 residues: N-(5'-phosphoribosyl)anthranilate isomerase (204 aa).

The protein belongs to the TrpF family.

It carries out the reaction N-(5-phospho-beta-D-ribosyl)anthranilate = 1-(2-carboxyphenylamino)-1-deoxy-D-ribulose 5-phosphate. The protein operates within amino-acid biosynthesis; L-tryptophan biosynthesis; L-tryptophan from chorismate: step 3/5. The sequence is that of N-(5'-phosphoribosyl)anthranilate isomerase from Geobacter sp. (strain M21).